The primary structure comprises 405 residues: L-carnitine CoA-transferase (405 aa).

CoA contacts are provided by Lys-97 and Arg-104. Residue Asp-169 is the Nucleophile of the active site.

The protein belongs to the CoA-transferase III family. CaiB subfamily. Homodimer.

The protein localises to the cytoplasm. The catalysed reaction is crotonobetainyl-CoA + (R)-carnitine = crotonobetaine + (R)-carnitinyl-CoA. The enzyme catalyses 4-(trimethylamino)butanoyl-CoA + (R)-carnitine = (R)-carnitinyl-CoA + 4-(trimethylamino)butanoate. It functions in the pathway amine and polyamine metabolism; carnitine metabolism. In terms of biological role, catalyzes the reversible transfer of the CoA moiety from gamma-butyrobetainyl-CoA to L-carnitine to generate L-carnitinyl-CoA and gamma-butyrobetaine. Is also able to catalyze the reversible transfer of the CoA moiety from gamma-butyrobetainyl-CoA or L-carnitinyl-CoA to crotonobetaine to generate crotonobetainyl-CoA. The polypeptide is L-carnitine CoA-transferase (Salmonella gallinarum (strain 287/91 / NCTC 13346)).